The primary structure comprises 248 residues: Eukaryotic translation initiation factor 6 (248 aa).

Belongs to the eIF-6 family. As to quaternary structure, monomer. Associates with the 60S ribosomal subunit.

It is found in the cytoplasm. It localises to the nucleus. The protein resides in the nucleolus. Its function is as follows. Binds to the 60S ribosomal subunit and prevents its association with the 40S ribosomal subunit to form the 80S initiation complex in the cytoplasm. May also be involved in ribosome biogenesis. The chain is Eukaryotic translation initiation factor 6 from Trypanosoma cruzi (strain CL Brener).